The sequence spans 209 residues: Pyridoxal phosphate homeostasis protein (209 aa).

The residue at position 31 (lysine 31) is an N6-(pyridoxal phosphate)lysine.

It belongs to the pyridoxal phosphate-binding protein YggS/PROSC family.

In terms of biological role, pyridoxal 5'-phosphate (PLP)-binding protein, which is involved in PLP homeostasis. This Deinococcus radiodurans (strain ATCC 13939 / DSM 20539 / JCM 16871 / CCUG 27074 / LMG 4051 / NBRC 15346 / NCIMB 9279 / VKM B-1422 / R1) protein is Pyridoxal phosphate homeostasis protein.